A 193-amino-acid chain; its full sequence is dCTP deaminase (193 aa).

Residues 110–115, D128, 136–138, Y171, K178, and Q182 contribute to the dCTP site; these read RSSLAR and VLE. The active-site Proton donor/acceptor is the E138.

It belongs to the dCTP deaminase family. In terms of assembly, homotrimer.

It carries out the reaction dCTP + H2O + H(+) = dUTP + NH4(+). The protein operates within pyrimidine metabolism; dUMP biosynthesis; dUMP from dCTP (dUTP route): step 1/2. Catalyzes the deamination of dCTP to dUTP. The protein is dCTP deaminase of Buchnera aphidicola subsp. Schizaphis graminum (strain Sg).